Consider the following 768-residue polypeptide: U-box domain-containing protein 45 (768 aa).

A U-box domain is found at 278–352; that stretch reads VPPEELRCPI…SSWCEQNGVQ (75 aa). ARM repeat units lie at residues 454 to 497, 500 to 540, 542 to 579, 581 to 620, and 623 to 662; these read EEAR…NLAV, NRNK…CLEE, KPVI…HLST, PPNI…NLVL, and AGKD…ILCN.

In terms of assembly, binds to SD129.

It catalyses the reaction S-ubiquitinyl-[E2 ubiquitin-conjugating enzyme]-L-cysteine + [acceptor protein]-L-lysine = [E2 ubiquitin-conjugating enzyme]-L-cysteine + N(6)-ubiquitinyl-[acceptor protein]-L-lysine.. It functions in the pathway protein modification; protein ubiquitination. Its function is as follows. Functions as an E3 ubiquitin ligase. In Arabidopsis thaliana (Mouse-ear cress), this protein is U-box domain-containing protein 45 (PUB45).